The following is a 197-amino-acid chain: 3-isopropylmalate dehydratase small subunit (197 aa).

This sequence belongs to the LeuD family. LeuD type 1 subfamily. Heterodimer of LeuC and LeuD.

The enzyme catalyses (2R,3S)-3-isopropylmalate = (2S)-2-isopropylmalate. It functions in the pathway amino-acid biosynthesis; L-leucine biosynthesis; L-leucine from 3-methyl-2-oxobutanoate: step 2/4. Catalyzes the isomerization between 2-isopropylmalate and 3-isopropylmalate, via the formation of 2-isopropylmaleate. The sequence is that of 3-isopropylmalate dehydratase small subunit from Acidothermus cellulolyticus (strain ATCC 43068 / DSM 8971 / 11B).